A 265-amino-acid chain; its full sequence is Mlc titration factor A (265 aa).

Zn(2+) is bound by residues H111, H148, H152, and E211.

Belongs to the MtfA family. In terms of assembly, interacts with Mlc. It depends on Zn(2+) as a cofactor.

The protein localises to the cytoplasm. Involved in the modulation of the activity of the glucose-phosphotransferase system (glucose-PTS). Interacts with the transcriptional repressor Mlc, preventing its interaction with DNA and leading to the modulation of expression of genes regulated by Mlc, including ptsG, which encodes the PTS system glucose-specific EIICB component. Its function is as follows. Shows zinc-dependent metallopeptidase activity. This Escherichia coli O9:H4 (strain HS) protein is Mlc titration factor A.